The chain runs to 664 residues: uncharacterized protein (664 aa).

An N-terminal signal peptide occupies residues 1 to 35; it reads MGVSVLTFHVSLFLKRILSIAFFLLSLSTLLRIVN. Residues asparagine 101 and asparagine 138 are each glycosylated (N-linked (GlcNAc...) asparagine). Sel1-like repeat units follow at residues 141–178 and 179–214; these read AFANNMMGFFYSTSFSEYASNNPALARIHWELAAKQGS and LDAHQFLAYHNLIALNMPQSDEEAVKHYKFISDHLF. N-linked (GlcNAc...) asparagine glycans are attached at residues asparagine 221, asparagine 300, and asparagine 371. Sel1-like repeat units lie at residues 337 to 372, 373 to 409, 410 to 441, and 442 to 477; these read AQSCGYLGLLHLFDKGPLFDIDKAYWWFKRGATKND, SNSYYGLGYMAYHGLTSNGVDREKGMRLINLAVMNEN, PHALMFLGLIRLEEARYEEAYHLFLRAATQKS, and VISYKYLADCYYNGTGTSRSMISASLYYKKFVEAIR. 2 N-linked (GlcNAc...) asparagine glycosylation sites follow: asparagine 454 and asparagine 537. Sel1-like repeat units lie at residues 564-599 and 601-636; these read IDAIFKLGDYYYYGIGTPKDYSKAYTCYKIAYEQSS and GMGLWNMAYMHEYGIGRDQDIYIARRLLDELSSNQN.

This sequence belongs to the sel-1 family.

This is an uncharacterized protein from Schizosaccharomyces pombe (strain 972 / ATCC 24843) (Fission yeast).